The following is a 604-amino-acid chain: Glucoamylase 1 (604 aa).

The N-terminal stretch at 1–25 (MQLFNLPLKVSFFLVLSYFSLLVSA) is a signal peptide. Positions 26-115 (ASIPSSASVQ…EFYIKYEVSG (90 aa)) are adsorption to raw starch. One can recognise a CBM21 domain in the interval 26–130 (ASIPSSASVQ…NNNSANYQVS (105 aa)). A starch degradation region spans residues 116-604 (KTYYDNNNSA…SYAKAGAPAA (489 aa)). An N-linked (GlcNAc...) asparagine glycan is attached at N122. The disordered stretch occupies residues 127–164 (YQVSTSKPTTTTATATTTTAPSTSTTTPPSRSEPATFP). The span at 130–162 (STSKPTTTTATATTTTAPSTSTTTPPSRSEPAT) shows a compositional bias: low complexity. N-linked (GlcNAc...) asparagine glycans are attached at residues N167, N230, and N236. W279 is a substrate binding site. The active-site Proton acceptor is D336. E339 serves as the catalytic Proton donor. An N-linked (GlcNAc...) asparagine glycan is attached at N564.

Belongs to the glycosyl hydrolase 15 family.

It catalyses the reaction Hydrolysis of terminal (1-&gt;4)-linked alpha-D-glucose residues successively from non-reducing ends of the chains with release of beta-D-glucose.. This is Glucoamylase 1 from Rhizopus oryzae (Mucormycosis agent).